The following is a 612-amino-acid chain: MFRCGGLAGAFKQKLVPLVRTVYVQRPKQRNRLPGNLFQQWRVPLELQMARQMASSGSSGGKMDNSVLVLIVGLSTIGAGAYAYKTIKEDQKRYNERVMGLGLSPEEKQRRAIASATEGGSVPQIRAPSHVPFLLIGGGTAAFAAARSIRARDPGARVLIVSEDPELPYMRPPLSKELWFSDDPNVTKTLQFRQWNGKERSIYFQPPSFYVSAQDLPNIENGGVAVLTGKKVVHLDVRGNMVKLNDGSQITFEKCLIATGGTPRSLSAIDRAGAEVKSRTTLFRKIGDFRALEKISREVKSITVIGGGFLGSELACALGRKSQASGIEVIQLFPEKGNMGKILPQYLSNWTMEKVKREGVKVMPNAIVQSVGVSGGRLLIKLKDGRKVETDHIVTAVGLEPNVELAKTGGLEIDSDFGGFRVNAELQARSNIWVAGDAACFYDIKLGRRRVEHHDHAVVSGRLAGENMTGAAKPYWHQSMFWSDLGPDVGYEAIGLVDSSLPTVGVFAKATAQDNPKSATEQSGTGIRSESETESEASEITIPPSAPAVPQVPVEGEDYGKGVIFYLRDKVVVGIVLWNVFNRMPIARKIIKDGEQHEDLNEVAKLFNIHED.

Short sequence motifs (mitochondrial localization signal) lie at residues 1-30 and 62-88; these read MFRC…PKQR and KMDN…KTIK. The transit peptide at 1 to 54 directs the protein to the mitochondrion; sequence MFRCGGLAGAFKQKLVPLVRTVYVQRPKQRNRLPGNLFQQWRVPLELQMARQMA. Residues 55–101 constitute a propeptide, removed in mature form; the sequence is SSGSSGGKMDNSVLVLIVGLSTIGAGAYAYKTIKEDQKRYNERVMGL. Lys108 is modified (N6-succinyllysine). Ser115 carries the post-translational modification Phosphoserine. The tract at residues 133–482 is FAD-dependent oxidoreductase; that stretch reads FLLIGGGTAA…KPYWHQSMFW (350 aa). FAD is bound by residues 137 to 141, 163 to 164, Arg171, and Lys176; these read GGGTA and ED. An NAD(+)-binding site is contributed by Trp195. Val232 contacts FAD. Lys254 is covalently cross-linked (Glycyl lysine isopeptide (Lys-Gly) (interchain with G-Cter in ubiquitin)). Phosphoserine is present on Ser267. Arg284 contacts FAD. NAD(+) is bound by residues 307–310, Glu335, and Lys341; that span reads GGFL. Ser370 bears the Phosphoserine mark. Lys387 is modified (N6-acetyllysine). NAD(+) is bound at residue Gly398. Asp437 serves as a coordination point for FAD. Positions 445 to 450 match the Nuclear localization signal motif; sequence KLGRRR. NAD(+) contacts are provided by residues 452 to 453, Trp482, and Glu492; that span reads EH. FAD-binding positions include 453–454 and Trp482; that span reads HH. The segment covering 512–528 has biased composition (polar residues); sequence AQDNPKSATEQSGTGIR. Positions 512-551 are disordered; sequence AQDNPKSATEQSGTGIRSESETESEASEITIPPSAPAVPQ. The residue at position 520 (Thr520) is a Phosphothreonine. Residues Ser523 and Ser529 each carry the phosphoserine modification. Asn582 contributes to the NAD(+) binding site. At Lys592 the chain carries N6-acetyllysine.

It belongs to the FAD-dependent oxidoreductase family. In terms of assembly, monomer (oxidized form). Homodimer (reduced form). Upon reduction with NADH, undergoes dimerization and forms tight, long-lived FADH2-NAD charge transfer complexes (CTC) resistant to oxidation. Also dimerizes with isoform 3 preventing its release from mitochondria. Interacts with XIAP/BIRC4. Interacts (via N-terminus) with EIF3G (via C-terminus). Interacts with PRELID1. Interacts with CHCHD4; the interaction increases in presence of NADH. Interacts with processed form of PARP1 (Poly [ADP-ribose] polymerase 1, processed C-terminus); interaction is mediated with poly-ADP-ribose chains attached to PARP1, promoting translocation into the nucleus. The cofactor is FAD. In terms of processing, under normal conditions, a 54-residue N-terminal segment is first proteolytically removed during or just after translocation into the mitochondrial intermembrane space (IMS) by the mitochondrial processing peptidase (MPP) to form the inner-membrane-anchored mature form (AIFmit). During apoptosis, it is further proteolytically processed at amino-acid position 101 leading to the generation of the mature form, which is confined to the mitochondrial IMS in a soluble form (AIFsol). AIFsol is released to the cytoplasm in response to specific death signals, and translocated to the nucleus, where it induces nuclear apoptosis in a caspase-independent manner. Post-translationally, ubiquitination by XIAP/BIRC4 does not lead to proteasomal degradation. Ubiquitination at Lys-254 by XIAP/BIRC4 blocks its ability to bind DNA and induce chromatin degradation, thereby inhibiting its ability to induce cell death. As to expression, expressed in cortical neurons (at protein level). In terms of tissue distribution, expressed in liver (at protein level).

It is found in the mitochondrion intermembrane space. Its subcellular location is the mitochondrion inner membrane. The protein resides in the cytoplasm. It localises to the nucleus. The protein localises to the perinuclear region. It is found in the mitochondrion. Its subcellular location is the cytosol. The enzyme catalyses A + NADH + H(+) = AH2 + NAD(+). In terms of biological role, functions both as NADH oxidoreductase and as regulator of apoptosis. In response to apoptotic stimuli, it is released from the mitochondrion intermembrane space into the cytosol and to the nucleus, where it functions as a proapoptotic factor in a caspase-independent pathway. Release into the cytoplasm is mediated upon binding to poly-ADP-ribose chains. The soluble form (AIFsol) found in the nucleus induces 'parthanatos' i.e. caspase-independent fragmentation of chromosomal DNA. Binds to DNA in a sequence-independent manner. Interacts with EIF3G, and thereby inhibits the EIF3 machinery and protein synthesis, and activates caspase-7 to amplify apoptosis. Plays a critical role in caspase-independent, pyknotic cell death in hydrogen peroxide-exposed cells. In contrast, participates in normal mitochondrial metabolism. Plays an important role in the regulation of respiratory chain biogenesis by interacting with CHCHD4 and controlling CHCHD4 mitochondrial import. The sequence is that of Apoptosis-inducing factor 1, mitochondrial from Mus musculus (Mouse).